A 440-amino-acid chain; its full sequence is Serine hydroxymethyltransferase (440 aa).

(6S)-5,6,7,8-tetrahydrofolate contacts are provided by residues Leu119 and 123–125 (GHL). At Lys228 the chain carries N6-(pyridoxal phosphate)lysine. Residue 370–372 (SPF) participates in (6S)-5,6,7,8-tetrahydrofolate binding.

This sequence belongs to the SHMT family. Homodimer. The cofactor is pyridoxal 5'-phosphate.

Its subcellular location is the cytoplasm. It carries out the reaction (6R)-5,10-methylene-5,6,7,8-tetrahydrofolate + glycine + H2O = (6S)-5,6,7,8-tetrahydrofolate + L-serine. It participates in one-carbon metabolism; tetrahydrofolate interconversion. The protein operates within amino-acid biosynthesis; glycine biosynthesis; glycine from L-serine: step 1/1. In terms of biological role, catalyzes the reversible interconversion of serine and glycine with tetrahydrofolate (THF) serving as the one-carbon carrier. This reaction serves as the major source of one-carbon groups required for the biosynthesis of purines, thymidylate, methionine, and other important biomolecules. Also exhibits THF-independent aldolase activity toward beta-hydroxyamino acids, producing glycine and aldehydes, via a retro-aldol mechanism. This Chloroherpeton thalassium (strain ATCC 35110 / GB-78) protein is Serine hydroxymethyltransferase.